Here is a 205-residue protein sequence, read N- to C-terminus: Adenylyl-sulfate kinase (205 aa).

39-46 (GLSGAGKS) is an ATP binding site. The active-site Phosphoserine intermediate is Ser113.

Belongs to the APS kinase family.

The catalysed reaction is adenosine 5'-phosphosulfate + ATP = 3'-phosphoadenylyl sulfate + ADP + H(+). It participates in sulfur metabolism; hydrogen sulfide biosynthesis; sulfite from sulfate: step 2/3. Its function is as follows. Catalyzes the synthesis of activated sulfate. The protein is Adenylyl-sulfate kinase of Vibrio parahaemolyticus serotype O3:K6 (strain RIMD 2210633).